The chain runs to 150 residues: Putative antitoxin VapB45 (150 aa).

Residues 124–150 (AQRPVAAGRPRPRPQRPVSDRVSDQRR) form a disordered region. Positions 141–150 (VSDRVSDQRR) are enriched in basic and acidic residues.

This sequence belongs to the phD/YefM antitoxin family.

In terms of biological role, possibly the antitoxin component of a type II toxin-antitoxin (TA) system. Its cognate toxin is VapC45 (Potential). In Mycobacterium tuberculosis (strain CDC 1551 / Oshkosh), this protein is Putative antitoxin VapB45 (vapB45).